Consider the following 454-residue polypeptide: Death-associated protein kinase 3 (454 aa).

The Protein kinase domain maps to 13-275; the sequence is YEMGEELGSG…IAQSLEHSWI (263 aa). ATP is bound by residues 19–27 and Lys42; that span reads LGSGQFAIV. Phosphoserine; by autocatalysis is present on Ser50. Pyridone 6 contacts are provided by Glu94 and Val96. Asp139 (proton acceptor) is an active-site residue. The activation segment stretch occupies residues 161-204; it reads DFGIAHKIEAGNEFKNIFGTPEFVAPEIVNYEPLGLEADMWSIG. 2 positions are modified to phosphothreonine: Thr180 and Thr225. Thr265 is modified (phosphothreonine; by autocatalysis and ROCK1). Thr299 is subject to Phosphothreonine; by autocatalysis, DAPK1 and ROCK1. Position 306 is a phosphothreonine; by autocatalysis (Thr306). Ser309 bears the Phosphoserine; by DAPK1 mark. Ser311 carries the post-translational modification Phosphoserine; by autocatalysis and DAPK1. Phosphoserine; by DAPK1 is present on residues Ser312, Ser318, and Ser326. The interval 427–441 is leucine-zipper; it reads VASEMRFVQDLVRAL.

The protein belongs to the protein kinase superfamily. CAMK Ser/Thr protein kinase family. DAP kinase subfamily. As to quaternary structure, homooligomer in its kinase-active form (homotrimers and homodimers are reported); monomeric in its kinase-inactive form. Homodimerization is required for activation segment autophosphorylation. Isoform 1 and isoform 2 interact with myosin and PPP1R12A; interaction of isoform 1 with PPP1R12A is inhibited by RhoA dominant negative form. Interacts with NLK, DAXX, STAT3, RHOD (GTP-bound form) and TCP10L. Interacts with PAWR; the interaction is reported conflictingly: according to PubMed:17953487 does not interact with PAWR. Interacts with ULK1; may be a substrate of ULK1. Interacts with LUZP1; the interaction is likely to occur throughout the cell cycle and reduces the LUZP1-mediated suppression of MYL9 phosphorylation. Requires Mg(2+) as cofactor. In terms of processing, the phosphorylation status is critical for kinase activity, oligomerization and intracellular localization. Phosphorylation at Thr-180, Thr-225 and Thr-265 is essential for activity. The phosphorylated form is localized in the cytoplasm promoted by phosphorylation at Thr-299; nuclear translocation or retention is maximal when it is not phosphorylated. Phosphorylation increases the trimeric form, and its dephosphorylation favors a kinase-inactive monomeric form. Both isoform 1 and isoform 2 can undergo autophosphorylation. In terms of tissue distribution, widely expressed. Isoform 1 and isoform 2 are expressed in the bladder smooth muscle.

The protein resides in the nucleus. It is found in the PML body. Its subcellular location is the cytoplasm. It localises to the cytoskeleton. The protein localises to the microtubule organizing center. The protein resides in the centrosome. It is found in the chromosome. Its subcellular location is the centromere. It localises to the spindle. The protein localises to the midbody. The catalysed reaction is L-seryl-[protein] + ATP = O-phospho-L-seryl-[protein] + ADP + H(+). It catalyses the reaction L-threonyl-[protein] + ATP = O-phospho-L-threonyl-[protein] + ADP + H(+). With respect to regulation, a sequential activation is proposed: autophosphorylation at consensus sites is leading to dimerization of the catalytic domain stabilized by phosphorylation at Ser-50 and activation segment exchange (producing an active confirmation of both kinase modules in trans) followed by phosphorylation at Thr-180 in the activation segment and at other regulatory sites. Phosphorylation at Thr-180, Thr-225 and Thr-265 is essential for activity. Oligomerization is required for full enzymatic activity. Inhibited by pyridone-6 (K00225), a potent, ATP-competitive inhibitor. In terms of biological role, serine/threonine kinase which is involved in the regulation of apoptosis, autophagy, transcription, translation and actin cytoskeleton reorganization. Involved in the regulation of smooth muscle contraction. Regulates both type I (caspase-dependent) apoptotic and type II (caspase-independent) autophagic cell deaths signal, depending on the cellular setting. Involved in regulation of starvation-induced autophagy. Regulates myosin phosphorylation in both smooth muscle and non-muscle cells. In smooth muscle, regulates myosin either directly by phosphorylating MYL12B and MYL9 or through inhibition of smooth muscle myosin phosphatase (SMPP1M) via phosphorylation of PPP1R12A; the inhibition of SMPP1M functions to enhance muscle responsiveness to Ca(2+) and promote a contractile state. Phosphorylates MYL12B in non-muscle cells leading to reorganization of actin cytoskeleton. Isoform 2 can phosphorylate myosin, PPP1R12A and MYL12B. Overexpression leads to condensation of actin stress fibers into thick bundles. Involved in actin filament focal adhesion dynamics. The function in both reorganization of actin cytoskeleton and focal adhesion dissolution is modulated by RhoD. Positively regulates canonical Wnt/beta-catenin signaling through interaction with NLK and TCF7L2. Phosphorylates RPL13A on 'Ser-77' upon interferon-gamma activation which is causing RPL13A release from the ribosome, RPL13A association with the GAIT complex and its subsequent involvement in transcript-selective translation inhibition. Enhances transcription from AR-responsive promoters in a hormone- and kinase-dependent manner. Involved in regulation of cell cycle progression and cell proliferation. May be a tumor suppressor. This Homo sapiens (Human) protein is Death-associated protein kinase 3 (DAPK3).